The following is a 177-amino-acid chain: Large ribosomal subunit protein uL6 (177 aa).

Belongs to the universal ribosomal protein uL6 family. In terms of assembly, part of the 50S ribosomal subunit.

Its function is as follows. This protein binds to the 23S rRNA, and is important in its secondary structure. It is located near the subunit interface in the base of the L7/L12 stalk, and near the tRNA binding site of the peptidyltransferase center. The polypeptide is Large ribosomal subunit protein uL6 (Methylocella silvestris (strain DSM 15510 / CIP 108128 / LMG 27833 / NCIMB 13906 / BL2)).